A 419-amino-acid chain; its full sequence is UDP-N-acetylglucosamine 1-carboxyvinyltransferase (419 aa).

22–23 (KN) lines the phosphoenolpyruvate pocket. A UDP-N-acetyl-alpha-D-glucosamine-binding site is contributed by R95. C119 (proton donor) is an active-site residue. 2-(S-cysteinyl)pyruvic acid O-phosphothioketal is present on C119. UDP-N-acetyl-alpha-D-glucosamine-binding positions include 164–167 (KVSV), D308, and I330.

The protein belongs to the EPSP synthase family. MurA subfamily.

The protein resides in the cytoplasm. It catalyses the reaction phosphoenolpyruvate + UDP-N-acetyl-alpha-D-glucosamine = UDP-N-acetyl-3-O-(1-carboxyvinyl)-alpha-D-glucosamine + phosphate. The protein operates within cell wall biogenesis; peptidoglycan biosynthesis. Functionally, cell wall formation. Adds enolpyruvyl to UDP-N-acetylglucosamine. This is UDP-N-acetylglucosamine 1-carboxyvinyltransferase from Rickettsia africae (strain ESF-5).